Here is a 745-residue protein sequence, read N- to C-terminus: Cellulose synthase-like protein E2 (745 aa).

Over residues 1–14 the composition is skewed to gly residues; that stretch reads MAGSGGGVVSGGRQ. A disordered region spans residues 1–20; the sequence is MAGSGGGVVSGGRQRGPPLF. Transmembrane regions (helical) follow at residues 29–49 and 66–86; these read AMAA…LIWL and WAWL…VLTL. Catalysis depends on residues Asp155 and Asp458. A run of 5 helical transmembrane segments spans residues 541–561, 568–588, 658–678, 686–706, and 723–743; these read FPTL…ISLF, WFIP…AESL, AMFV…VLGI, GPGG…IVAI, and LPAS…ILSI.

Belongs to the glycosyltransferase 2 family. Plant cellulose synthase-like E subfamily.

The protein localises to the golgi apparatus membrane. In terms of biological role, thought to be a Golgi-localized beta-glycan synthase that polymerize the backbones of noncellulosic polysaccharides (hemicelluloses) of plant cell wall. The chain is Cellulose synthase-like protein E2 (CSLE2) from Oryza sativa subsp. japonica (Rice).